The primary structure comprises 708 residues: Leukotoxin translocation ATP-binding protein LktB (708 aa).

The 126-residue stretch at 1 to 126 (MEANHQRNDL…ACYQGQLILV (126 aa)) folds into the Peptidase C39 domain. The 283-residue stretch at 155–437 (FLETLIVSIF…LAQLWQDFQQ (283 aa)) folds into the ABC transmembrane type-1 domain. The next 5 membrane-spanning stretches (helical) occupy residues 159–179 (LIVS…FQVV), 192–212 (LNII…LSGL), 270–290 (ALTS…MWYY), 296–316 (LVIL…SPIL), and 389–409 (VMVI…LSIG). Residues 469-704 (ISFKNIRFRY…SNGLYSYLHQ (236 aa)) enclose the ABC transporter domain. ATP is bound at residue 503–510 (GRSGSGKS).

It belongs to the ABC transporter superfamily. Protein-1 exporter (TC 3.A.1.109) family. Homodimer.

The protein resides in the cell inner membrane. It carries out the reaction ATP + H2O + proteinSide 1 = ADP + phosphate + proteinSide 2.. In terms of biological role, part of the ABC transporter complex LktBD involved in leukotoxin export. Transmembrane domains (TMD) form a pore in the inner membrane and the ATP-binding domain (NBD) is responsible for energy generation. The protein is Leukotoxin translocation ATP-binding protein LktB (lktB) of Mannheimia haemolytica (Pasteurella haemolytica).